We begin with the raw amino-acid sequence, 226 residues long: PKHD-type hydroxylase Sfri_0612 (226 aa).

The Fe2OG dioxygenase domain occupies 77–177 (KIFPPCFNRY…RIAAITWMQS (101 aa)). The Fe cation site is built by H95, D97, and H158. R168 is a binding site for 2-oxoglutarate.

It depends on Fe(2+) as a cofactor. L-ascorbate serves as cofactor.

This chain is PKHD-type hydroxylase Sfri_0612, found in Shewanella frigidimarina (strain NCIMB 400).